We begin with the raw amino-acid sequence, 476 residues long: uncharacterized protein (476 aa).

It belongs to the herpesviridae US22 family.

This is an uncharacterized protein from Homo sapiens (Human).